Consider the following 1438-residue polypeptide: DNA polymerase III PolC-type (1438 aa).

The Exonuclease domain occupies 422-578 (YVVFDVETTG…YDTEATAYIF (157 aa)).

Belongs to the DNA polymerase type-C family. PolC subfamily.

It is found in the cytoplasm. It carries out the reaction DNA(n) + a 2'-deoxyribonucleoside 5'-triphosphate = DNA(n+1) + diphosphate. In terms of biological role, required for replicative DNA synthesis. This DNA polymerase also exhibits 3' to 5' exonuclease activity. The protein is DNA polymerase III PolC-type of Staphylococcus aureus (strain Mu3 / ATCC 700698).